The chain runs to 413 residues: Palmitoyltransferase ZDHHC6 (413 aa).

Residues M1–P24 are Cytoplasmic-facing. Residues I25–W45 traverse the membrane as a helical segment. At Y46–N57 the chain is on the lumenal side. The helical transmembrane segment at F58–A78 threads the bilayer. The Cytoplasmic segment spans residues G79–S143. A DHHC domain is found at Q99–L149. The active-site S-palmitoyl cysteine intermediate is C129. The helical transmembrane segment at F144–M164 threads the bilayer. Over T165–P194 the chain is Lumenal. The chain crosses the membrane as a helical span at residues I195–G215. At T216–R413 the chain is on the cytoplasmic side. In terms of domain architecture, SH3 spans V313–C398. 3 S-palmitoyl cysteine lipidation sites follow: C328, C329, and C343. The short motif at K410–R413 is the Di-lysine motif element.

This sequence belongs to the DHHC palmitoyltransferase family. In terms of assembly, homooligomerizes. Interacts with SELENOK. Palmitoylated at 3 different sites by ZDHHC16. The combination of the different palmitoylation events strongly affects the quaternary assembly of ZDHHC6, its localization, stability and function. Palmitoylation at Cys-328 accelerates the turnover of ZDHHC6. Depalmitoylated by LYPLA2.

The protein resides in the endoplasmic reticulum membrane. It catalyses the reaction L-cysteinyl-[protein] + hexadecanoyl-CoA = S-hexadecanoyl-L-cysteinyl-[protein] + CoA. The enzyme catalyses L-cysteinyl-[protein] + octadecanoyl-CoA = S-octadecanoyl-L-cysteinyl-[protein] + CoA. Its function is as follows. Endoplasmic reticulum palmitoyl acyltransferase that mediates palmitoylation of proteins such as AMFR, CALX, ITPR1 and TFRC. Palmitoylates calnexin (CALX), which is required for its association with the ribosome-translocon complex and efficient folding of glycosylated proteins. Mediates palmitoylation of AMFR, promoting AMFR distribution to the peripheral endoplasmic reticulum. Together with SELENOK, palmitoylates ITPR1 in immune cells, leading to regulate ITPR1 stability and function. Stearoyltransferase that mediates stearoylation of TFRC to inhibit TFRC-mediated activation of the JNK pathway and mitochondrial fragmentation. This Mus musculus (Mouse) protein is Palmitoyltransferase ZDHHC6.